The primary structure comprises 538 residues: Mevalonate kinase erg12 (538 aa).

A disordered region spans residues Met1–Pro87. A compositionally biased stretch (polar residues) spans Thr9–Ser29. Positions Thr57–Thr69 are enriched in low complexity. Residues Lys99, Ser231, and Gly236–Ser242 contribute to the ATP site. Mg(2+)-binding residues include Ser242 and Glu287. Asp298 functions as the Proton acceptor in the catalytic mechanism.

The protein belongs to the GHMP kinase family. Mevalonate kinase subfamily. Homodimer. Mg(2+) serves as cofactor.

The protein localises to the cytoplasm. Its subcellular location is the cytosol. The catalysed reaction is (R)-mevalonate + ATP = (R)-5-phosphomevalonate + ADP + H(+). It functions in the pathway isoprenoid biosynthesis; isopentenyl diphosphate biosynthesis via mevalonate pathway; isopentenyl diphosphate from (R)-mevalonate: step 1/3. Functionally, mevalonate kinase; part of the second module of ergosterol biosynthesis pathway that includes the middle steps of the pathway. Erg12 converts mevalonate into 5-phosphomevalonate. The second module is carried out in the vacuole and involves the formation of farnesyl diphosphate, which is also an important intermediate in the biosynthesis of ubiquinone, dolichol, heme and prenylated proteins. Activity by the mevalonate kinase erg12 (AFUA_4G07780) first converts mevalonate into 5-phosphomevalonate. 5-phosphomevalonate is then further converted to 5-diphosphomevalonate by the phosphomevalonate kinase erg8 (AFUA_5G10680). The diphosphomevalonate decarboxylase mvd1 (AFUA_4G07130) then produces isopentenyl diphosphate. The isopentenyl-diphosphate delta-isomerase idi1 (AFUA_6G11160) then catalyzes the 1,3-allylic rearrangement of the homoallylic substrate isopentenyl (IPP) to its highly electrophilic allylic isomer, dimethylallyl diphosphate (DMAPP). Finally the farnesyl diphosphate synthase erg20 (AFUA_5G02450) catalyzes the sequential condensation of isopentenyl pyrophosphate with dimethylallyl pyrophosphate, and then with the resultant geranylpyrophosphate to the ultimate product farnesyl pyrophosphate. This Aspergillus fumigatus (strain ATCC MYA-4609 / CBS 101355 / FGSC A1100 / Af293) (Neosartorya fumigata) protein is Mevalonate kinase erg12.